Reading from the N-terminus, the 926-residue chain is Eukaryotic translation initiation factor 3 subunit C (926 aa).

Disordered regions lie at residues 1–36 (MSRF…KQPI) and 158–309 (AYKQ…KVKG). Over residues 8–21 (GSDSESESSLSGDE) the composition is skewed to low complexity. A compositionally biased stretch (acidic residues) spans 165-189 (ESADEDQEKDEDSEASSSSDDDSDE). Residues 207-216 (SRSKFLKKEE) are compositionally biased toward basic and acidic residues. Positions 217–243 (AEDEAESSEDEDWGSDSDESDSDESDD) are enriched in acidic residues. Positions 258 to 275 (TVTEGDRQAVEKKKEDKA) are enriched in basic and acidic residues. Positions 289–302 (EGEEGEEDDNEGGG) are enriched in acidic residues. The region spanning 675–851 (FHMHINLELL…QTVVMHGTEP (177 aa)) is the PCI domain. Residues 880–926 (QGSYGGYFNRGDRGDRGDRDQKDQYQRKEGGYMRRGYRRDQQGQSNY) are disordered. The span at 889–911 (RGDRGDRGDRDQKDQYQRKEGGY) shows a compositional bias: basic and acidic residues.

This sequence belongs to the eIF-3 subunit C family. In terms of assembly, component of the eukaryotic translation initiation factor 3 (eIF-3) complex, which is composed of 13 subunits: eif3a, eif3b, eif3c, eif3d, eif3e, eif3f, eif3g, eif3h, eif3i, eif3j, eif3k, eif3l and eif3m.

It is found in the cytoplasm. Component of the eukaryotic translation initiation factor 3 (eIF-3) complex, which is involved in protein synthesis of a specialized repertoire of mRNAs and, together with other initiation factors, stimulates binding of mRNA and methionyl-tRNAi to the 40S ribosome. The eIF-3 complex specifically targets and initiates translation of a subset of mRNAs involved in cell proliferation. The chain is Eukaryotic translation initiation factor 3 subunit C (eif3c) from Xenopus laevis (African clawed frog).